A 359-amino-acid polypeptide reads, in one-letter code: Probable 2-oxoacid dependent dioxygenase (359 aa).

Positions 207–308 constitute a Fe2OG dioxygenase domain; that stretch reads KGLWMLCHCF…ISVACFFVHT (102 aa). Fe cation is bound by residues His-231, Asp-233, and His-287. The segment at 329–359 is disordered; it reads PPKYRDTTSESSNHYVARKPNGNSSLDHLRI. Over residues 349-359 the composition is skewed to polar residues; the sequence is NGNSSLDHLRI.

Belongs to the iron/ascorbate-dependent oxidoreductase family. The cofactor is Fe(2+). As to expression, expressed in leaves and seeds. All cultivars with seed-only-functional allele have low to non-detectable GSL-OH expression in the leaves.

The catalysed reaction is gluconapin + AH2 + O2 = progoitrin + A + H2O. In terms of biological role, necessary for the hydroxylation of but-3-enyl glucosinolate to 2-hydroxybut-3-enyl glucosinolate, which is toxic to insects, bacteria and nematodes, inhibits seed germination and produces bitter flavors. This Arabidopsis thaliana (Mouse-ear cress) protein is Probable 2-oxoacid dependent dioxygenase.